A 306-amino-acid chain; its full sequence is Mitochondrial basic amino acids transporter (306 aa).

6 consecutive transmembrane segments (helical) span residues Ala-2–Phe-22, Gly-61–Gly-81, Phe-96–Ala-116, Gly-153–Tyr-172, Leu-187–Thr-207, and Leu-255–Tyr-275. 3 Solcar repeats span residues Ala-2–Ala-86, Asp-90–Ala-178, and Pro-190–Tyr-275. The segment at Val-283–Leu-306 is disordered. Low complexity predominate over residues Ala-287–Leu-306.

This sequence belongs to the mitochondrial carrier (TC 2.A.29) family.

Its subcellular location is the mitochondrion inner membrane. It catalyses the reaction L-lysine(out) + L-arginine(in) = L-lysine(in) + L-arginine(out). The catalysed reaction is L-histidine(out) + L-arginine(in) = L-histidine(in) + L-arginine(out). It carries out the reaction L-ornithine(in) + L-arginine(out) = L-ornithine(out) + L-arginine(in). The enzyme catalyses L-homoarginine(in) + L-arginine(out) = L-homoarginine(out) + L-arginine(in). It catalyses the reaction N(omega)-methyl-L-arginine(in) + L-arginine(out) = N(omega)-methyl-L-arginine(out) + L-arginine(in). The catalysed reaction is L-arginine(in) = L-arginine(out). It carries out the reaction L-lysine(in) = L-lysine(out). The enzyme catalyses L-ornithine(in) = L-ornithine(out). It catalyses the reaction L-histidine(out) = L-histidine(in). Mitochondrial transporter of arginine, lysine, homoarginine, methylarginine and, to a much lesser extent, ornithine and histidine. Does not transport carnitine nor acylcarnitines. Functions by both counter-exchange and uniport mechanisms. Plays a physiological role in the import of basic amino acids into mitochondria for mitochondrial protein synthesis and amino acid degradation. This chain is Mitochondrial basic amino acids transporter (Slc25a29), found in Rattus norvegicus (Rat).